The following is a 205-amino-acid chain: RNA pyrophosphohydrolase (205 aa).

Residues 6-149 (GFRPNVGIVL…KRGVYARALR (144 aa)) form the Nudix hydrolase domain. Positions 38 to 59 (GGMNTDETPVEAMYRELREETG) match the Nudix box motif. The interval 178–205 (GSSAAGHDSPRKRPRKRNGARAMRINND) is disordered. Residues 187-196 (PRKRPRKRNG) show a composition bias toward basic residues.

It belongs to the Nudix hydrolase family. RppH subfamily. A divalent metal cation is required as a cofactor.

Accelerates the degradation of transcripts by removing pyrophosphate from the 5'-end of triphosphorylated RNA, leading to a more labile monophosphorylated state that can stimulate subsequent ribonuclease cleavage. In Xanthomonas axonopodis pv. citri (strain 306), this protein is RNA pyrophosphohydrolase.